We begin with the raw amino-acid sequence, 37 residues long: Large ribosomal subunit protein bL36c (37 aa).

Belongs to the bacterial ribosomal protein bL36 family.

It is found in the plastid. The polypeptide is Large ribosomal subunit protein bL36c (Aneura mirabilis (Parasitic liverwort)).